A 21-amino-acid chain; its full sequence is Pollen allergen Ole e 7 (21 aa).

The sequence is that of Pollen allergen Ole e 7 from Olea europaea (Common olive).